The primary structure comprises 274 residues: Indole-3-glycerol phosphate synthase (274 aa).

It belongs to the TrpC family.

It catalyses the reaction 1-(2-carboxyphenylamino)-1-deoxy-D-ribulose 5-phosphate + H(+) = (1S,2R)-1-C-(indol-3-yl)glycerol 3-phosphate + CO2 + H2O. It participates in amino-acid biosynthesis; L-tryptophan biosynthesis; L-tryptophan from chorismate: step 4/5. This Kineococcus radiotolerans (strain ATCC BAA-149 / DSM 14245 / SRS30216) protein is Indole-3-glycerol phosphate synthase.